The following is an 843-amino-acid chain: Neuroligin-1 (843 aa).

The first 45 residues, 1–45 (MALPRCMWPNYVWRAMMACVVHRGSGAPLTLCLLGCLLQTFHVLS), serve as a signal peptide directing secretion. Residues 46 to 697 (QKLDDVDPLV…DQRDYSTELS (652 aa)) lie on the Extracellular side of the membrane. Asparagine 109 carries an N-linked (GlcNAc...) (complex) asparagine glycan. A disulfide bond links cysteine 117 and cysteine 153. The segment at 167–190 (LTKKHTDDLGDNDGAEDEDIRDSG) is disordered. Residues 175-186 (LGDNDGAEDEDI) are compositionally biased toward acidic residues. 2 N-linked (GlcNAc...) (complex) asparagine glycosylation sites follow: asparagine 303 and asparagine 343. 2 cysteine pairs are disulfide-bonded: cysteine 342–cysteine 353 and cysteine 512–cysteine 546. Residue asparagine 547 is glycosylated (N-linked (GlcNAc...) asparagine). The disordered stretch occupies residues 647-688 (TKVPSTDITLRPTRKNSTPVTSAFPTAKQDDPKQQPSPFSVD). Positions 661–670 (KNSTPVTSAF) are enriched in polar residues. 2 O-linked (GalNAc...) serine glycosylation sites follow: serine 683 and serine 686. A helical transmembrane segment spans residues 698–718 (VTIAVGASLLFLNILAFAALY). Topologically, residues 719-843 (YKKDKRRHDV…HPHSHSTTRV (125 aa)) are cytoplasmic. The disordered stretch occupies residues 822 to 843 (GGQNNTLPHPHPHPHSHSTTRV). The segment covering 831-843 (PHPHPHSHSTTRV) has biased composition (basic residues).

Belongs to the type-B carboxylesterase/lipase family. Interacts with neurexins NRXN1, NRXN2 and NRXN3. Interaction with neurexins is mediated by heparan sulfate glycan modification on neurexin. Interacts (via its C-terminus) with DLG4/PSD-95 (via PDZ domain 3). Interacts with AIP1, GOPC and PDZRN3. Interacts with NLGN3. As to expression, brain and arteries (at protein level). Expressed in olfactory bulb. Detected in brain.

The protein localises to the cell membrane. It localises to the postsynaptic density. Its subcellular location is the synaptic cleft. It is found in the synaptic cell membrane. Functionally, cell surface protein involved in cell-cell-interactions via its interactions with neurexin family members. Plays a role in synapse function and synaptic signal transmission, and probably mediates its effects by recruiting and clustering other synaptic proteins. May promote the initial formation of synapses, but is not essential for this. In vitro, triggers the de novo formation of presynaptic structures. May be involved in specification of excitatory synapses. Required to maintain wakefulness quality and normal synchrony of cerebral cortex activity during wakefulness and sleep. The protein is involved in nervous system development. This is Neuroligin-1 (Nlgn1) from Mus musculus (Mouse).